The following is a 148-amino-acid chain: Large ribosomal subunit protein bL9 (148 aa).

Belongs to the bacterial ribosomal protein bL9 family.

In terms of biological role, binds to the 23S rRNA. This Solibacter usitatus (strain Ellin6076) protein is Large ribosomal subunit protein bL9.